We begin with the raw amino-acid sequence, 140 residues long: Lymphocyte antigen 6L (140 aa).

The first 20 residues, 1–20 (MAPLLLVLWASLVSMELTGG), serve as a signal peptide directing secretion. A UPAR/Ly6 domain is found at 31–124 (LSCFECFKVL…GSWEGFWSLP (94 aa)). 2 disulfides stabilise this stretch: Cys-33/Cys-50 and Cys-105/Cys-110. Ser-116 carries GPI-anchor amidated serine lipidation. Residues 117-140 (WEGFWSLPGRLLLPMGLGLFCTLL) constitute a propeptide, removed in mature form.

The protein resides in the cell membrane. The sequence is that of Lymphocyte antigen 6L from Mus musculus (Mouse).